A 212-amino-acid chain; its full sequence is Large ribosomal subunit protein uL4 (212 aa).

Residues 45–71 form a disordered region; it reads RQGNASTKTRAEVRGGGRKPWRQKGTG. Residues 60 to 71 are compositionally biased toward basic residues; it reads GGRKPWRQKGTG.

The protein belongs to the universal ribosomal protein uL4 family. Part of the 50S ribosomal subunit.

Its function is as follows. One of the primary rRNA binding proteins, this protein initially binds near the 5'-end of the 23S rRNA. It is important during the early stages of 50S assembly. It makes multiple contacts with different domains of the 23S rRNA in the assembled 50S subunit and ribosome. Forms part of the polypeptide exit tunnel. The chain is Large ribosomal subunit protein uL4 from Nostoc punctiforme (strain ATCC 29133 / PCC 73102).